The following is a 561-amino-acid chain: Oxygen-dependent choline dehydrogenase (561 aa).

6–35 (DYIIIGAGSAGNVLATRLTEDADVSVLLLE) contributes to the FAD binding site. His-475 acts as the Proton acceptor in catalysis.

This sequence belongs to the GMC oxidoreductase family. Requires FAD as cofactor.

It carries out the reaction choline + A = betaine aldehyde + AH2. It catalyses the reaction betaine aldehyde + NAD(+) + H2O = glycine betaine + NADH + 2 H(+). The protein operates within amine and polyamine biosynthesis; betaine biosynthesis via choline pathway; betaine aldehyde from choline (cytochrome c reductase route): step 1/1. In terms of biological role, involved in the biosynthesis of the osmoprotectant glycine betaine. Catalyzes the oxidation of choline to betaine aldehyde and betaine aldehyde to glycine betaine at the same rate. This is Oxygen-dependent choline dehydrogenase from Pseudomonas aeruginosa (strain UCBPP-PA14).